We begin with the raw amino-acid sequence, 227 residues long: Fibrillarin-like rRNA/tRNA 2'-O-methyltransferase (227 aa).

S-adenosyl-L-methionine-binding positions include 86-87 (TT), 105-106 (EF), 130-131 (DA), and 150-153 (DVAQ).

This sequence belongs to the methyltransferase superfamily. Fibrillarin family. In terms of assembly, interacts with nop5. Component of box C/D small ribonucleoprotein (sRNP) particles that contain rpl7ae, FlpA and nop5, plus a guide RNA.

Its function is as follows. Involved in pre-rRNA and tRNA processing. Utilizes the methyl donor S-adenosyl-L-methionine to catalyze the site-specific 2'-hydroxyl methylation of ribose moieties in rRNA and tRNA. Site specificity is provided by a guide RNA that base pairs with the substrate. Methylation occurs at a characteristic distance from the sequence involved in base pairing with the guide RNA. This is Fibrillarin-like rRNA/tRNA 2'-O-methyltransferase from Pyrococcus horikoshii (strain ATCC 700860 / DSM 12428 / JCM 9974 / NBRC 100139 / OT-3).